Here is a 150-residue protein sequence, read N- to C-terminus: Leukotriene C4 synthase (150 aa).

The Cytoplasmic segment spans residues 1-6 (MKDEVA). A helical transmembrane segment spans residues 7-27 (LLATVTLLGVLLQAYFSLQVI). The Lumenal segment spans residues 28–48 (RARRAHRVSPPLTTGPPEFER). A glutathione-binding site is contributed by R30. Catalysis depends on R31, which acts as the Proton donor. A Phosphoserine modification is found at S36. The helical transmembrane segment at 49-69 (VYRAQVNCSEYFPLFLATLWV) threads the bilayer. Glutathione is bound by residues 51 to 55 (RAQVN) and 58 to 59 (EY). Topologically, residues 70–73 (AGVY) are cytoplasmic. The chain crosses the membrane as a helical span at residues 74–94 (FHEGAAALCGLVYLFTRLRYF). 93-97 (YFWGY) contacts glutathione. Topologically, residues 95-104 (WGYARSAQLR) are lumenal. R104 serves as the catalytic Proton acceptor. Residues 105–124 (LAPLYASARALWLLLALATL) traverse the membrane as a helical segment. Over 125–150 (GLLAHFLPAAARAALLRLLRALLRTA) the chain is Cytoplasmic.

It belongs to the MAPEG family. As to quaternary structure, homotrimer. Interacts with ALOX5AP and ALOX5. Phosphorylation at Ser-36 by RPS6KB1 inhibits the leukotriene-C4 synthase activity.

It localises to the nucleus outer membrane. The protein resides in the endoplasmic reticulum membrane. Its subcellular location is the nucleus membrane. It carries out the reaction leukotriene C4 = leukotriene A4 + glutathione. The catalysed reaction is (13S,14S)-epoxy-(4Z,7Z,9E,11E,16Z,19Z)-docosahexaenoate + glutathione = (13R)-S-glutathionyl-(14S)-hydroxy-(4Z,7Z,9E,11E,16Z,19Z)-docosahexaenoate. It functions in the pathway lipid metabolism; leukotriene C4 biosynthesis. Inhibited by MK886. Its function is as follows. Catalyzes the conjugation of leukotriene A4 with reduced glutathione (GSH) to form leukotriene C4 with high specificity. Can also catalyze the transfer of a glutathionyl group from glutathione (GSH) to 13(S),14(S)-epoxy-docosahexaenoic acid to form maresin conjugate in tissue regeneration 1 (MCTR1), a bioactive lipid mediator that possess potent anti-inflammatory and proresolving actions. In Cavia porcellus (Guinea pig), this protein is Leukotriene C4 synthase (LTC4S).